Consider the following 322-residue polypeptide: Pantothenate kinase (322 aa).

100-107 lines the ATP pocket; the sequence is GSVAVGKS.

The protein belongs to the prokaryotic pantothenate kinase family.

It localises to the cytoplasm. It catalyses the reaction (R)-pantothenate + ATP = (R)-4'-phosphopantothenate + ADP + H(+). It functions in the pathway cofactor biosynthesis; coenzyme A biosynthesis; CoA from (R)-pantothenate: step 1/5. The sequence is that of Pantothenate kinase from Brucella abortus (strain 2308).